The primary structure comprises 581 residues: mRNA-decapping enzyme 1B (581 aa).

Position 145 is a phosphoserine (serine 145). Disordered stretches follow at residues 181 to 222 (QISS…PEPQ) and 236 to 258 (APCQEATGPPQTLPLQQQQPEKF). The segment covering 204–219 (GSRQQRGPRPGQTSDP) has biased composition (polar residues). Positions 244–255 (PPQTLPLQQQQP) are enriched in low complexity. Phosphoserine occurs at positions 269 and 326. Residues 349-411 (AENRCEPGAP…HQPVTGPGEV (63 aa)) are disordered. Residues 355–367 (PGAPAPASSATTP) show a composition bias toward low complexity. Threonine 366 is modified (phosphothreonine). The segment covering 368 to 381 (VSLAQPTRLSSALP) has biased composition (polar residues). The span at 382–401 (PQTPGPRALPRPAPPGPGPG) shows a compositional bias: pro residues. Residue serine 412 is modified to Phosphoserine. The segment at 427-468 (QQLPAPGRPALAAKFPTATLSTRARNPLEPWRDPPPSTEQPA) is disordered. Serine 475 carries the post-translational modification Phosphoserine. The interval 498 to 522 (SWAPPQERSRAPLPPGNQDPAATPT) is disordered.

The protein belongs to the DCP1 family. Interacts with DCP1A.

It localises to the cytoplasm. It is found in the nucleus. It carries out the reaction a 5'-end (N(7)-methyl 5'-triphosphoguanosine)-ribonucleoside in mRNA + H2O = N(7)-methyl-GDP + a 5'-end phospho-ribonucleoside in mRNA + 2 H(+). In terms of biological role, may play a role in the degradation of mRNAs, both in normal mRNA turnover and in nonsense-mediated mRNA decay. May remove the 7-methyl guanine cap structure from mRNA molecules, yielding a 5'-phosphorylated mRNA fragment and 7m-GDP. This Bos taurus (Bovine) protein is mRNA-decapping enzyme 1B (DCP1B).